A 648-amino-acid chain; its full sequence is Biosynthetic arginine decarboxylase (648 aa).

Lys-109 is modified (N6-(pyridoxal phosphate)lysine). Substrate is bound at residue 291 to 301 (LDVGGGLGVDY).

This sequence belongs to the Orn/Lys/Arg decarboxylase class-II family. SpeA subfamily. Requires Mg(2+) as cofactor. It depends on pyridoxal 5'-phosphate as a cofactor.

The enzyme catalyses L-arginine + H(+) = agmatine + CO2. Catalyzes the biosynthesis of agmatine from arginine. This is Biosynthetic arginine decarboxylase from Prochlorococcus marinus (strain SARG / CCMP1375 / SS120).